The sequence spans 607 residues: DNA mismatch repair protein MutL (607 aa).

It belongs to the DNA mismatch repair MutL/HexB family.

Its function is as follows. This protein is involved in the repair of mismatches in DNA. It is required for dam-dependent methyl-directed DNA mismatch repair. May act as a 'molecular matchmaker', a protein that promotes the formation of a stable complex between two or more DNA-binding proteins in an ATP-dependent manner without itself being part of a final effector complex. The sequence is that of DNA mismatch repair protein MutL from Gemmatimonas aurantiaca (strain DSM 14586 / JCM 11422 / NBRC 100505 / T-27).